Here is a 257-residue protein sequence, read N- to C-terminus: Imidazole glycerol phosphate synthase subunit HisF (257 aa).

Catalysis depends on residues Asp-11 and Asp-130.

This sequence belongs to the HisA/HisF family. Heterodimer of HisH and HisF.

It localises to the cytoplasm. The enzyme catalyses 5-[(5-phospho-1-deoxy-D-ribulos-1-ylimino)methylamino]-1-(5-phospho-beta-D-ribosyl)imidazole-4-carboxamide + L-glutamine = D-erythro-1-(imidazol-4-yl)glycerol 3-phosphate + 5-amino-1-(5-phospho-beta-D-ribosyl)imidazole-4-carboxamide + L-glutamate + H(+). It functions in the pathway amino-acid biosynthesis; L-histidine biosynthesis; L-histidine from 5-phospho-alpha-D-ribose 1-diphosphate: step 5/9. Functionally, IGPS catalyzes the conversion of PRFAR and glutamine to IGP, AICAR and glutamate. The HisF subunit catalyzes the cyclization activity that produces IGP and AICAR from PRFAR using the ammonia provided by the HisH subunit. The sequence is that of Imidazole glycerol phosphate synthase subunit HisF from Vibrio parahaemolyticus serotype O3:K6 (strain RIMD 2210633).